The chain runs to 1038 residues: MAQTPNPSRRSLVGPPPHPFLTPRPERRQLELRWADGGSQSSARRSGVGLTGGGGGGGGGSEMKDCEANVQVVLRCRPLSEEEQRANVQSAISCDDLKREVTVLHSLFKQADKTFTFDKVFGPKAQQRSIYDRAVKPIVKDVLEGYNCTVFAFGQTGTGKTYTMEGEMRQKASELSATAGVIPRAVRDIFDILEERKADYSMKVTFLELYNEEITDLLALEDQSRFPEDRQKRAISLMEDRKGGAVIRGLEEVVVYSASEIYNLLEHGSARRRTADTALNKQSSRSHSVFSIYIHVKETTVGNQELLKCGRLNLVDLAGSENIARSGAREGRAREAGEMNKSLLTLGRVITALVEHSVHVPYRDSKLTRLLRESLGGKAKTCIIATVSPSIHCLEETVVTLDYAYRAKSIKNKPEANQKVCKSVILKDLYQEMERMKQDVKAAREKNGIYIPQERFALEEAEKKTMRDKIEYLETQNKELKMNIESCKKEYLDLEEAHSRANISLKEKEFIISNLLHAEQSIVERAKDIRGALENASGDISALVDKLGRQSNTEAENKGLLFDFRSQLDHGLDLLHDTVVGCVCEQRQFLESMNEQNKIYFSAKSESTSQLERRIAKAKDIYASGVQCMNQLANTLHQRSIAHSEQMGLNILSHATRAANFLAVMVSEAEQVSNDVFKSISELKELLAFSADQQEVMFKRDLVSAQVMSKTSIDFFEDIRGHASRLIEHMEQSQAESSSQLLKFEEDFKELSVREEQAALDKIAGILAGLTAKKSTMVLDCVGQLNGKCREEQKHLKLQISNLQKVSDSGGKEAAAYAAKVESQFSEDKLSHCKIKDQMEDILQQSLKKTVHSVSYWSHTETSLEHLNKISVVEADDFIEETRKENESILQKMLIVSTQNDAKFAAITSDMLTAVKDSHLRDSESRMRIETVFATSSDHLEMLDTKHSQGTESIRSMTAKCLERDYKANSPVRRRPGELMTNAYSLESIEQLRTPVPDLVVKFRSENNLDEVDKGKRYVDQGTRTPRSPLMPVNHYNK.

Residues 1–63 (MAQTPNPSRR…GGGGGGGSEM (63 aa)) form a disordered region. Positions 24-34 (RPERRQLELRW) are enriched in basic and acidic residues. Residues 49 to 61 (GLTGGGGGGGGGS) show a composition bias toward gly residues. Positions 69 to 410 (NVQVVLRCRP…LDYAYRAKSI (342 aa)) constitute a Kinesin motor domain. An ATP-binding site is contributed by 154–161 (GQTGTGKT). Residues 453-502 (QERFALEEAEKKTMRDKIEYLETQNKELKMNIESCKKEYLDLEEAHSRAN) adopt a coiled-coil conformation. Residues 1013–1038 (DKGKRYVDQGTRTPRSPLMPVNHYNK) are disordered.

It belongs to the TRAFAC class myosin-kinesin ATPase superfamily. Kinesin family. KIN-5/BimC subfamily.

The protein localises to the cytoplasm. Its subcellular location is the cytoskeleton. The protein resides in the spindle. Responsible for microtubule translocation. May be important for the organization of phragmoplast-specific arrays of microtubules. Plays an essential role in stabilizing the mitotic spindle. Required during mitotic cytokinesis. The sequence is that of Kinesin-like protein KIN-5B from Oryza sativa subsp. japonica (Rice).